A 328-amino-acid chain; its full sequence is L-lactate dehydrogenase (328 aa).

NAD(+) is bound by residues valine 18, glutamate 39, lysine 46, tyrosine 71, and 85-86 (GA). Positions 88 and 94 each coordinate substrate. Residues serine 107, 124–126 (AAN), and serine 149 each bind NAD(+). Residue 126-129 (NPVD) participates in substrate binding. 154–157 (DSAR) provides a ligand contact to substrate. Positions 159 and 174 each coordinate beta-D-fructose 1,6-bisphosphate. The active-site Proton acceptor is the histidine 181. Tyrosine 226 is subject to Phosphotyrosine. Threonine 235 lines the substrate pocket.

This sequence belongs to the LDH/MDH superfamily. LDH family. As to quaternary structure, homotetramer.

The protein localises to the cytoplasm. The enzyme catalyses (S)-lactate + NAD(+) = pyruvate + NADH + H(+). Its pathway is fermentation; pyruvate fermentation to lactate; (S)-lactate from pyruvate: step 1/1. Allosterically activated by fructose 1,6-bisphosphate (FBP). Functionally, catalyzes the conversion of lactate to pyruvate. The sequence is that of L-lactate dehydrogenase from Streptococcus pneumoniae (strain 70585).